The primary structure comprises 238 residues: Ribonuclease HII (238 aa).

One can recognise an RNase H type-2 domain in the interval 12–197 (GIVAGVDEAG…VLELLTDDLL (186 aa)). A divalent metal cation-binding residues include Asp-18, Glu-19, and Asp-107.

It belongs to the RNase HII family. Mn(2+) is required as a cofactor. The cofactor is Mg(2+).

It localises to the cytoplasm. The catalysed reaction is Endonucleolytic cleavage to 5'-phosphomonoester.. In terms of biological role, endonuclease that specifically degrades the RNA of RNA-DNA hybrids. The protein is Ribonuclease HII of Thermotoga petrophila (strain ATCC BAA-488 / DSM 13995 / JCM 10881 / RKU-1).